The sequence spans 365 residues: tRNA/tmRNA (uracil-C(5))-methyltransferase (365 aa).

S-adenosyl-L-methionine contacts are provided by Q189, Y217, N222, E238, and D298. C323 functions as the Nucleophile in the catalytic mechanism. The active-site Proton acceptor is E357.

This sequence belongs to the class I-like SAM-binding methyltransferase superfamily. RNA M5U methyltransferase family. TrmA subfamily.

The catalysed reaction is uridine(54) in tRNA + S-adenosyl-L-methionine = 5-methyluridine(54) in tRNA + S-adenosyl-L-homocysteine + H(+). It carries out the reaction uridine(341) in tmRNA + S-adenosyl-L-methionine = 5-methyluridine(341) in tmRNA + S-adenosyl-L-homocysteine + H(+). Functionally, dual-specificity methyltransferase that catalyzes the formation of 5-methyluridine at position 54 (m5U54) in all tRNAs, and that of position 341 (m5U341) in tmRNA (transfer-mRNA). The protein is tRNA/tmRNA (uracil-C(5))-methyltransferase of Shewanella halifaxensis (strain HAW-EB4).